A 203-amino-acid chain; its full sequence is Ribonuclease HII (203 aa).

The RNase H type-2 domain occupies 16 to 203 (ENIACCDEVG…HRKSFLNKIL (188 aa)). Positions 22, 23, and 120 each coordinate a divalent metal cation.

It belongs to the RNase HII family. Mn(2+) serves as cofactor. Mg(2+) is required as a cofactor.

It localises to the cytoplasm. It catalyses the reaction Endonucleolytic cleavage to 5'-phosphomonoester.. Functionally, endonuclease that specifically degrades the RNA of RNA-DNA hybrids. This chain is Ribonuclease HII, found in Alkaliphilus oremlandii (strain OhILAs) (Clostridium oremlandii (strain OhILAs)).